The primary structure comprises 413 residues: Multifunctional CCA protein (413 aa).

Gly8 and Arg11 together coordinate ATP. Residues Gly8 and Arg11 each contribute to the CTP site. Positions 21 and 23 each coordinate Mg(2+). The ATP site is built by Arg91, Arg137, and Arg140. CTP contacts are provided by Arg91, Arg137, and Arg140. The HD domain maps to 228–329 (TGIHTLMVLE…VKLFDKADLW (102 aa)).

This sequence belongs to the tRNA nucleotidyltransferase/poly(A) polymerase family. Bacterial CCA-adding enzyme type 1 subfamily. As to quaternary structure, monomer. Can also form homodimers and oligomers. It depends on Mg(2+) as a cofactor. Ni(2+) is required as a cofactor.

It catalyses the reaction a tRNA precursor + 2 CTP + ATP = a tRNA with a 3' CCA end + 3 diphosphate. The catalysed reaction is a tRNA with a 3' CCA end + 2 CTP + ATP = a tRNA with a 3' CCACCA end + 3 diphosphate. Catalyzes the addition and repair of the essential 3'-terminal CCA sequence in tRNAs without using a nucleic acid template. Adds these three nucleotides in the order of C, C, and A to the tRNA nucleotide-73, using CTP and ATP as substrates and producing inorganic pyrophosphate. tRNA 3'-terminal CCA addition is required both for tRNA processing and repair. Also involved in tRNA surveillance by mediating tandem CCA addition to generate a CCACCA at the 3' terminus of unstable tRNAs. While stable tRNAs receive only 3'-terminal CCA, unstable tRNAs are marked with CCACCA and rapidly degraded. The polypeptide is Multifunctional CCA protein (Shewanella loihica (strain ATCC BAA-1088 / PV-4)).